The primary structure comprises 399 residues: Cell division protein FtsZ (399 aa).

GTP is bound by residues 18–22, 105–107, E136, R140, and D184; these read GGGVN and GTG. The segment at 311 to 399 is disordered; the sequence is GFDGGQPPSK…EELDVPDFLK (89 aa). Over residues 388-399 the composition is skewed to acidic residues; the sequence is AAEELDVPDFLK.

The protein belongs to the FtsZ family. Homodimer. Polymerizes to form a dynamic ring structure in a strictly GTP-dependent manner. Interacts directly with several other division proteins.

It is found in the cytoplasm. Its function is as follows. Essential cell division protein that forms a contractile ring structure (Z ring) at the future cell division site. The regulation of the ring assembly controls the timing and the location of cell division. One of the functions of the FtsZ ring is to recruit other cell division proteins to the septum to produce a new cell wall between the dividing cells. Binds GTP and shows GTPase activity. In Streptomyces coelicolor (strain ATCC BAA-471 / A3(2) / M145), this protein is Cell division protein FtsZ.